We begin with the raw amino-acid sequence, 266 residues long: Endoplasmic reticulum vesicle protein 25 (266 aa).

Positions 1-26 (MGSSPQSSTRTLLGLLFLLLVQLSSA) are cleaved as a signal peptide. Residues 27 to 188 (LKFDLHASSG…TNESTNERVK (162 aa)) lie on the Lumenal side of the membrane. The GOLD domain maps to 39-129 (ERCIRNFVFK…YKSVELDVEI (91 aa)). A helical transmembrane segment spans residues 189–209 (WFAFGTMGMLVGLGVWQVVYL). Over 210 to 266 (RAYFRYVDFPVSWRVDGVVANCCSCCEQVEASYLRSSRVVFWSPLVMWTRLSWLILR) the chain is Cytoplasmic.

This sequence belongs to the EMP24/GP25L family.

Its subcellular location is the endoplasmic reticulum membrane. The protein resides in the golgi apparatus membrane. Functionally, constituent of COPII-coated endoplasmic reticulum-derived transport vesicles. Required for efficient transport of a subset of secretory proteins to the Golgi. Facilitates retrograde transport from the Golgi to the endoplasmic reticulum. This chain is Endoplasmic reticulum vesicle protein 25 (erv25), found in Aspergillus fumigatus (strain ATCC MYA-4609 / CBS 101355 / FGSC A1100 / Af293) (Neosartorya fumigata).